Here is a 96-residue protein sequence, read N- to C-terminus: Co-chaperonin GroES (96 aa).

Belongs to the GroES chaperonin family. Heptamer of 7 subunits arranged in a ring. Interacts with the chaperonin GroEL.

The protein resides in the cytoplasm. Its function is as follows. Together with the chaperonin GroEL, plays an essential role in assisting protein folding. The GroEL-GroES system forms a nano-cage that allows encapsulation of the non-native substrate proteins and provides a physical environment optimized to promote and accelerate protein folding. GroES binds to the apical surface of the GroEL ring, thereby capping the opening of the GroEL channel. The protein is Co-chaperonin GroES of Neisseria meningitidis serogroup A / serotype 4A (strain DSM 15465 / Z2491).